We begin with the raw amino-acid sequence, 214 residues long: Nodulation protein A (214 aa).

Belongs to the NodA family.

The protein localises to the cytoplasm. In terms of biological role, N-acyltransferase required for nodulation. Acts in the production of a small, heat-stable compound (Nod) that stimulates mitosis in various plant protoplasts. This Methylobacterium nodulans (strain LMG 21967 / CNCM I-2342 / ORS 2060) protein is Nodulation protein A.